Here is a 564-residue protein sequence, read N- to C-terminus: Iron-sensing transcriptional repressor (564 aa).

A GATA-type 1 zinc finger spans residues 12–36; the sequence is CSNCHKTTTSLWRRGPDNSLLCNAC. The segment at 100-170 is disordered; the sequence is ASKSQSGRKS…SSPPHEPSVT (71 aa). A Phosphoserine modification is found at S109. Over residues 109 to 120 the composition is skewed to low complexity; sequence SLSPNPSSVPSS. The span at 135-148 shows a compositional bias: polar residues; sequence QIVSDTTTETSNGT. A GATA-type 2 zinc finger spans residues 172–196; the sequence is CQNCATTNTPLWRRDESGNPICNAC. Disordered stretches follow at residues 226-285, 381-409, and 443-496; these read GNAN…NTGV, DSSK…NPLG, and LLNP…VQGS. Polar residues-rich tracts occupy residues 240-253, 260-271, 381-407, and 450-486; these read SGDS…QSTR, SFPNGNGHASGN, DSSK…QSNP, and PSNS…SPVS.

As to quaternary structure, interacts with tup11.

Its subcellular location is the nucleus. Its activity is regulated as follows. Activated by iron. Functionally, transcriptional repressor that binds the consensus promoter sequence 5'-[AT]GATAA-3' during iron-replete conditions to down-regulate transcription of target genes. Represses the expression of the iron transporter fio1 in response to high iron concentrations. Also represses the expression of str1, str2 and str3. Represses the expression of shu1 in presence of iron. This chain is Iron-sensing transcriptional repressor, found in Schizosaccharomyces pombe (strain 972 / ATCC 24843) (Fission yeast).